Consider the following 132-residue polypeptide: Small ribosomal subunit protein uS11 (132 aa).

A disordered region spans residues 1-21 (MAAPKSAVRKPRRKDKKNIAV). Basic residues predominate over residues 7–16 (AVRKPRRKDK).

Belongs to the universal ribosomal protein uS11 family. As to quaternary structure, part of the 30S ribosomal subunit. Interacts with proteins S7 and S18. Binds to IF-3.

In terms of biological role, located on the platform of the 30S subunit, it bridges several disparate RNA helices of the 16S rRNA. Forms part of the Shine-Dalgarno cleft in the 70S ribosome. The chain is Small ribosomal subunit protein uS11 from Clavibacter sepedonicus (Clavibacter michiganensis subsp. sepedonicus).